The sequence spans 134 residues: Large ribosomal subunit protein bL21 (134 aa).

Belongs to the bacterial ribosomal protein bL21 family. As to quaternary structure, part of the 50S ribosomal subunit. Contacts protein L20.

This protein binds to 23S rRNA in the presence of protein L20. This is Large ribosomal subunit protein bL21 from Pelagibacter ubique (strain HTCC1062).